We begin with the raw amino-acid sequence, 161 residues long: MPSFDTVCEASMVDVKHAVENTTKEITTRFDFKGTPAAIELKDKEITLTGDADFQLSQIEDILRNKLTKRSVDVRFLDKGEVQKIGGDKVKQVIKVRNGIETELAKKIQRLIKDSKIKVQAAIQESKLRVTGAKRDDLQAAMALIKKDITEVPLSFDNFRD.

This sequence belongs to the YajQ family.

Its function is as follows. Nucleotide-binding protein. This chain is Nucleotide-binding protein Rfer_2692, found in Albidiferax ferrireducens (strain ATCC BAA-621 / DSM 15236 / T118) (Rhodoferax ferrireducens).